A 177-amino-acid chain; its full sequence is Protein C (177 aa).

Residues 1–10 (MSTKAWNASR) show a composition bias toward polar residues. Residues 1–38 (MSTKAWNASRLSGPDPSTPWSLRKPLQHGSRPPKGKRL) form a disordered region.

It belongs to the morbillivirus protein C family.

This is Protein C (P/V/C) from Rinderpest virus (strain RBOK) (RDV).